Reading from the N-terminus, the 130-residue chain is Small ribosomal subunit protein uS8y (130 aa).

It belongs to the universal ribosomal protein uS8 family.

This is Small ribosomal subunit protein uS8y (RPS15AC) from Arabidopsis thaliana (Mouse-ear cress).